Reading from the N-terminus, the 835-residue chain is MGDTELELSPTHLEELQKSPSTSTTSSLSLPSSPSSGPHPLTSSSPSTSEGLPTSSPPLDVISEGLGELSLVIDTEVAKKACQEVLQKVKFLKGDGEVSSASSEPILANGTAHPEANDGGQPPKISEEEVEPIKSVRRRQKNNSSKQSWLLRLFESKLFDISMAISYLYNSKEPGVQAYIGNRLFSFRNEDVDFYLPQLLNMYIHMDEDVGDAIKPYVVYRCRQSINFSLQCAWLLGAYSSDMHISTQRHSRGTKLRKLILSDELKPSSQRIRREVPQPPPPYPPPLHHGPGMSEHSLSPSKRTHQRSKSDATVSISLSSNLKRTASNPKVETSQDEPVRLTPQREFIKSLMGIGKRLATLPTKEQKTQRLISELSLLNHKLPARVWLPTAAFDHHVVRVPHTQAVVLNSKDKAPYLIYVEVLECENFETSSVPVRIPETQIRSTRSVENLPDCGITPDQRASSFSTVPNYDNDDEAWSVDDIGELQVELPEIHTNSCDNISQFSVDSITSQESKEPIFIAAGDIRRRLSEQLAHTPTTFRKDPEDPSAVALKEPWQEKVRRIREGSPYGHLPNWRLLSVIVKCGDDLRQELLAYQVLKQLQIIWEQERVPLWIKPYKILVISSDSGMIEPVVNAVSIHQVKKQSQLLLLDYFRQEHGNFNTEEFLTAQRNFVQSCAGYCLICYLLQVKDRHNGNILLDSEGHIIHIDFGFILSSSPRNLGFETSAFKLTSEFVDVMGGLDGDMFNYYKMLMLQGLIAARKHMEKVIQIVEIMQQGSQLPCFHGSSTIRNLKERFHMNLTEEQLQVLVEQMVDGSMRSITTKLYDGFQYLTNGIM.

3 disordered regions span residues methionine 1 to valine 61, serine 99 to arginine 139, and proline 267 to leucine 341. Over residues serine 19–leucine 59 the composition is skewed to low complexity. One can recognise a PIK helical domain in the interval leucine 59 to serine 262. Basic and acidic residues-rich tracts occupy residues isoleucine 125 to lysine 134 and proline 267 to valine 276. Pro residues predominate over residues proline 277–histidine 288. Polar residues predominate over residues aspartate 311 to glutamate 332. The PI3K/PI4K catalytic domain maps to glutamate 554–threonine 820. Residues valine 560–glycine 566 are G-loop. Positions glutamine 687 to asparagine 695 are catalytic loop. Positions histidine 706–threonine 730 are activation loop.

The protein belongs to the PI3/PI4-kinase family. Type III PI4K subfamily. The cofactor is Mg(2+). Requires Mn(2+) as cofactor. Expressed in the inner ear otic vesicles.

The protein localises to the endomembrane system. The protein resides in the mitochondrion outer membrane. Its subcellular location is the rough endoplasmic reticulum membrane. It catalyses the reaction a 1,2-diacyl-sn-glycero-3-phospho-(1D-myo-inositol) + ATP = a 1,2-diacyl-sn-glycero-3-phospho-(1D-myo-inositol 4-phosphate) + ADP + H(+). In terms of biological role, phosphorylates phosphatidylinositol (PI) in the first committed step in the production of the second messenger inositol-1,4,5,-trisphosphate (PIP). May play an important role the in inner ear development. The polypeptide is Phosphatidylinositol 4-kinase beta (pi4kb) (Danio rerio (Zebrafish)).